Reading from the N-terminus, the 124-residue chain is Large ribosomal subunit protein bL12 (124 aa).

This sequence belongs to the bacterial ribosomal protein bL12 family. In terms of assembly, homodimer. Part of the ribosomal stalk of the 50S ribosomal subunit. Forms a multimeric L10(L12)X complex, where L10 forms an elongated spine to which 2 to 4 L12 dimers bind in a sequential fashion. Binds GTP-bound translation factors.

Its function is as follows. Forms part of the ribosomal stalk which helps the ribosome interact with GTP-bound translation factors. Is thus essential for accurate translation. This Burkholderia mallei (strain NCTC 10247) protein is Large ribosomal subunit protein bL12.